The primary structure comprises 616 residues: Dihydroxy-acid dehydratase (616 aa).

A Mg(2+)-binding site is contributed by aspartate 81. Cysteine 122 contacts [2Fe-2S] cluster. Residues aspartate 123 and lysine 124 each contribute to the Mg(2+) site. Lysine 124 is modified (N6-carboxylysine). Cysteine 195 lines the [2Fe-2S] cluster pocket. Glutamate 491 contacts Mg(2+). Residue serine 517 is the Proton acceptor of the active site.

It belongs to the IlvD/Edd family. In terms of assembly, homodimer. The cofactor is [2Fe-2S] cluster. It depends on Mg(2+) as a cofactor.

The catalysed reaction is (2R)-2,3-dihydroxy-3-methylbutanoate = 3-methyl-2-oxobutanoate + H2O. It carries out the reaction (2R,3R)-2,3-dihydroxy-3-methylpentanoate = (S)-3-methyl-2-oxopentanoate + H2O. It participates in amino-acid biosynthesis; L-isoleucine biosynthesis; L-isoleucine from 2-oxobutanoate: step 3/4. The protein operates within amino-acid biosynthesis; L-valine biosynthesis; L-valine from pyruvate: step 3/4. In terms of biological role, functions in the biosynthesis of branched-chain amino acids. Catalyzes the dehydration of (2R,3R)-2,3-dihydroxy-3-methylpentanoate (2,3-dihydroxy-3-methylvalerate) into 2-oxo-3-methylpentanoate (2-oxo-3-methylvalerate) and of (2R)-2,3-dihydroxy-3-methylbutanoate (2,3-dihydroxyisovalerate) into 2-oxo-3-methylbutanoate (2-oxoisovalerate), the penultimate precursor to L-isoleucine and L-valine, respectively. The protein is Dihydroxy-acid dehydratase of Salmonella typhi.